We begin with the raw amino-acid sequence, 416 residues long: Multifunctional CCA protein (416 aa).

ATP contacts are provided by Gly-8 and Arg-11. 2 residues coordinate CTP: Gly-8 and Arg-11. Asp-21 and Asp-23 together coordinate Mg(2+). Residues Arg-91, Arg-137, and Arg-140 each coordinate ATP. CTP contacts are provided by Arg-91, Arg-137, and Arg-140. One can recognise an HD domain in the interval Thr-228 to Trp-329.

It belongs to the tRNA nucleotidyltransferase/poly(A) polymerase family. Bacterial CCA-adding enzyme type 1 subfamily. As to quaternary structure, monomer. Can also form homodimers and oligomers. The cofactor is Mg(2+). It depends on Ni(2+) as a cofactor.

The catalysed reaction is a tRNA precursor + 2 CTP + ATP = a tRNA with a 3' CCA end + 3 diphosphate. It catalyses the reaction a tRNA with a 3' CCA end + 2 CTP + ATP = a tRNA with a 3' CCACCA end + 3 diphosphate. Functionally, catalyzes the addition and repair of the essential 3'-terminal CCA sequence in tRNAs without using a nucleic acid template. Adds these three nucleotides in the order of C, C, and A to the tRNA nucleotide-73, using CTP and ATP as substrates and producing inorganic pyrophosphate. tRNA 3'-terminal CCA addition is required both for tRNA processing and repair. Also involved in tRNA surveillance by mediating tandem CCA addition to generate a CCACCA at the 3' terminus of unstable tRNAs. While stable tRNAs receive only 3'-terminal CCA, unstable tRNAs are marked with CCACCA and rapidly degraded. This chain is Multifunctional CCA protein, found in Shewanella sp. (strain MR-4).